A 66-amino-acid chain; its full sequence is Large ribosomal subunit protein bL35 (66 aa).

This sequence belongs to the bacterial ribosomal protein bL35 family.

The chain is Large ribosomal subunit protein bL35 from Brucella canis (strain ATCC 23365 / NCTC 10854 / RM-666).